The primary structure comprises 212 residues: MAAPPQLQALLQAVNKLLRQRRYHAALAVIKGFRNGAVYGVKIRAPHALVMTFLFRSGSLREKLQAILKATYIHSRNLACFVFAYKSLHALQSHVQGETHQMHSFLAAFIGGLLLFGENNNINSQINMYLTSRVLYALCRLGVEKGYIPALKWDPFPLHTAVIWGLVLWLFEYHRPTLQPSLQSSMTYLYEDSNVWHDLSDFLIFNKSHPSK.

The next 2 membrane-spanning stretches (helical) occupy residues 97–117 (GETH…LLFG) and 153–173 (WDPF…LFEY). Residue Asn-206 is glycosylated (N-linked (GlcNAc...) asparagine).

It belongs to the peroxisomal membrane protein PXMP2/4 family. In terms of assembly, interacts with PEX19.

The protein localises to the peroxisome membrane. The protein is Peroxisomal membrane protein 4 (Pxmp4) of Mus musculus (Mouse).